The following is a 222-amino-acid chain: Glutathione S-transferase A6 (222 aa).

The GST N-terminal domain occupies 3–83; it reads EKPLFHYDEA…YFSSKYNLYG (81 aa). Glutathione-binding positions include Y9, R45, 54–55, and 67–68; these read QV and QT. One can recognise a GST C-terminal domain in the interval 85 to 208; that stretch reads DMKERALIDM…QPGSQRQPPV (124 aa).

The protein belongs to the GST superfamily. Alpha family. In terms of assembly, homodimer or heterodimer of GSTA1 and GSTA2.

It localises to the cytoplasm. It catalyses the reaction RX + glutathione = an S-substituted glutathione + a halide anion + H(+). Its function is as follows. Conjugation of reduced glutathione to a wide number of exogenous and endogenous hydrophobic electrophiles. This Rattus norvegicus (Rat) protein is Glutathione S-transferase A6 (Gsta6).